Reading from the N-terminus, the 143-residue chain is Large ribosomal subunit protein uL15 (143 aa).

The tract at residues 1 to 52 is disordered; that stretch reads MKLNTLAPAAGSKSAPKRLGRGIGSGLGKTSGKGHKGQKARSGGYHKVGFEG. The span at 21 to 31 shows a compositional bias: gly residues; it reads RGIGSGLGKTS.

The protein belongs to the universal ribosomal protein uL15 family. As to quaternary structure, part of the 50S ribosomal subunit.

Its function is as follows. Binds to the 23S rRNA. This Francisella tularensis subsp. tularensis (strain FSC 198) protein is Large ribosomal subunit protein uL15.